The sequence spans 114 residues: Iron-sulfur cluster insertion protein ErpA (114 aa).

Iron-sulfur cluster is bound by residues C42, C106, and C108.

It belongs to the HesB/IscA family. In terms of assembly, homodimer. The cofactor is iron-sulfur cluster.

Functionally, required for insertion of 4Fe-4S clusters for at least IspG. The protein is Iron-sulfur cluster insertion protein ErpA of Edwardsiella ictaluri (strain 93-146).